The primary structure comprises 238 residues: Ras association domain-containing protein 3 (238 aa).

Serine 2 is modified (N-acetylserine). A disordered region spans residues 26–48 (RAPQGKPRSGQQDVEKEKETHSY). The segment covering 38-48 (DVEKEKETHSY) has biased composition (basic and acidic residues). Positions 79 to 186 (YTGFIKVQME…TLSFVLREHE (108 aa)) constitute a Ras-associating domain. The SARAH domain occupies 187–234 (IGEWEAFSLPELQNFLRILDKEEDEQLQNLKRRYTAYRQKLEEALREV).

In terms of tissue distribution, widely expressed.

It localises to the cytoplasm. Its subcellular location is the cytoskeleton. In Homo sapiens (Human), this protein is Ras association domain-containing protein 3 (RASSF3).